A 446-amino-acid polypeptide reads, in one-letter code: Rhoptry surface protein CERLI1 (446 aa).

The 170-residue stretch at 39-208 (KPIGQLYRLM…NQTKNNEKIE (170 aa)) folds into the C2 domain. One can recognise a PH domain in the interval 252–363 (GYLLHSNFYI…ILVSNYKRER (112 aa)).

The protein resides in the cytoplasmic vesicle. The protein localises to the secretory vesicle. It localises to the rhoptry membrane. In terms of biological role, essential for merozoite invasion of host cells by controlling rhoptry secretion. Binds to phosphatidic acid (PA) and phosphatidylinositol 4,5-bisphosphate (PIP2) lipids and thus, likely contributes to the assembly of the machinery that docks or primes the rhoptry to the parasite cell membrane prior to the fusion with the host cell membrane. This chain is Rhoptry surface protein CERLI1, found in Plasmodium falciparum (isolate 3D7).